We begin with the raw amino-acid sequence, 421 residues long: Enolase (421 aa).

Gln161 provides a ligand contact to (2R)-2-phosphoglycerate. The Proton donor role is filled by Glu203. 3 residues coordinate Mg(2+): Asp240, Glu283, and Asp310. Residues Lys335, Arg364, Ser365, and Lys386 each contribute to the (2R)-2-phosphoglycerate site. The active-site Proton acceptor is the Lys335.

The protein belongs to the enolase family. The cofactor is Mg(2+).

Its subcellular location is the cytoplasm. It localises to the secreted. The protein localises to the cell surface. The enzyme catalyses (2R)-2-phosphoglycerate = phosphoenolpyruvate + H2O. It participates in carbohydrate degradation; glycolysis; pyruvate from D-glyceraldehyde 3-phosphate: step 4/5. Functionally, catalyzes the reversible conversion of 2-phosphoglycerate (2-PG) into phosphoenolpyruvate (PEP). It is essential for the degradation of carbohydrates via glycolysis. The protein is Enolase of Sulfurimonas denitrificans (strain ATCC 33889 / DSM 1251) (Thiomicrospira denitrificans (strain ATCC 33889 / DSM 1251)).